A 311-amino-acid polypeptide reads, in one-letter code: Urease accessory protein UreD 2 (311 aa).

The protein belongs to the UreD family. In terms of assembly, ureD, UreF and UreG form a complex that acts as a GTP-hydrolysis-dependent molecular chaperone, activating the urease apoprotein by helping to assemble the nickel containing metallocenter of UreC. The UreE protein probably delivers the nickel.

It is found in the cytoplasm. Its function is as follows. Required for maturation of urease via the functional incorporation of the urease nickel metallocenter. In Methylorubrum extorquens (strain PA1) (Methylobacterium extorquens), this protein is Urease accessory protein UreD 2.